Here is a 533-residue protein sequence, read N- to C-terminus: Adenosine deaminase (533 aa).

Residues 1 to 19 form the signal peptide; sequence MKILLAVVFVLNLTNLAVP.

This sequence belongs to the metallo-dependent hydrolases superfamily. Adenosine and AMP deaminases family. ADGF subfamily. The cofactor is Zn(2+). Proteolytically cleaved by human mast cell tryptase and chymase. In terms of tissue distribution, female salivary gland (at protein level).

It localises to the secreted. It catalyses the reaction adenosine + H2O + H(+) = inosine + NH4(+). It carries out the reaction 2'-deoxyadenosine + H2O + H(+) = 2'-deoxyinosine + NH4(+). Its function is as follows. Catalyzes the deamination of adenosine to inosine and deoxyadenosine to deoxyinosine. Induces degranulation of host mast cells, and secretion of tryptase and IL6. Modulates enzymatic activities of human tryptase and chymase. Induces release of cytokines, such as IL1B, IL6, TNF, CCL2, IFN-beta (INFB1) and ISG15, from host monocytes and macrophages. Activates host NF-kappa-B signaling pathway in TAK1/MAP3K7-dependent manner. Functionally, (Microbial infection) Promotes replication of dengue virus type 2 in host cells probably via modulation of cytokine production in host macrophages and monocytes. This chain is Adenosine deaminase, found in Aedes albopictus (Asian tiger mosquito).